The chain runs to 335 residues: 3-isopropylmalate dehydrogenase (335 aa).

4 residues coordinate substrate: Arg-87, Arg-97, Arg-121, and Asp-211. Asp-211, Asp-235, and Asp-239 together coordinate Mg(2+). An NAD(+)-binding site is contributed by 271–283 (GSAPDIAGQSKAD).

It belongs to the isocitrate and isopropylmalate dehydrogenases family. LeuB type 2 subfamily. Homodimer. Mg(2+) serves as cofactor. The cofactor is Mn(2+).

It is found in the cytoplasm. The enzyme catalyses (2R,3S)-3-isopropylmalate + NAD(+) = 4-methyl-2-oxopentanoate + CO2 + NADH. It participates in amino-acid biosynthesis; L-leucine biosynthesis; L-leucine from 3-methyl-2-oxobutanoate: step 3/4. Its function is as follows. Catalyzes the oxidation of 3-carboxy-2-hydroxy-4-methylpentanoate (3-isopropylmalate) to 3-carboxy-4-methyl-2-oxopentanoate. The product decarboxylates to 4-methyl-2 oxopentanoate. The polypeptide is 3-isopropylmalate dehydrogenase (Nocardia farcinica (strain IFM 10152)).